Reading from the N-terminus, the 363-residue chain is MKESIRSKLENLVERLDEVNHLISDPEIINNQNKFRNLTKEHSQLTPVVETFNQFIQNQGDLQEAKDMIKSGDPDLKEMGQEELPELEKQQATLEAELQKMLLPKDPNDDANIFLEIRAGTGGDEAAIFAGDLFRMYSRYAETMRWQVEVINSQEGEHGGYKEIIARIIGDGAYSRLKFESGAHRVQRVPATETQGRVHTSAATVVIMPEAQDVEQIDLNPADLKVDTFRASGAGGQHVNKTDSAIRITHIPTGTVVECQDERSQHKNRARAMSLLASRIMDERQRIHDQEIAQERKSLVGSGDRSERIRTYNYPQGRVTDHRINLTLYKLDEIMQGGLQQVVDPLINEYQAEQLAALSEDSA.

Residue Q237 is modified to N5-methylglutamine.

The protein belongs to the prokaryotic/mitochondrial release factor family. In terms of processing, methylated by PrmC. Methylation increases the termination efficiency of RF1.

Its subcellular location is the cytoplasm. Functionally, peptide chain release factor 1 directs the termination of translation in response to the peptide chain termination codons UAG and UAA. This chain is Peptide chain release factor 1, found in Hydrogenovibrio crunogenus (strain DSM 25203 / XCL-2) (Thiomicrospira crunogena).